The chain runs to 313 residues: Extracellular metalloprotease (313 aa).

The signal sequence occupies residues methionine 1–alanine 34. The disordered stretch occupies residues alanine 35–lysine 74. The propeptide occupies alanine 35–serine 93. Positions asparagine 37–aspartate 60 are enriched in polar residues. The cysteines at positions 131 and 147 are disulfide-linked. Residues histidine 146 and serine 267 each act as charge relay system in the active site.

This sequence belongs to the peptidase S1B family. Monomer.

It localises to the secreted. This is Extracellular metalloprotease (mpr) from Bacillus subtilis (strain 168).